The following is a 61-amino-acid chain: Small ribosomal subunit protein uS14 (61 aa).

Residues C24, C27, C40, and C43 each contribute to the Zn(2+) site.

This sequence belongs to the universal ribosomal protein uS14 family. Zinc-binding uS14 subfamily. As to quaternary structure, part of the 30S ribosomal subunit. Contacts proteins S3 and S10. Zn(2+) is required as a cofactor.

Binds 16S rRNA, required for the assembly of 30S particles and may also be responsible for determining the conformation of the 16S rRNA at the A site. The chain is Small ribosomal subunit protein uS14 from Coprothermobacter proteolyticus (strain ATCC 35245 / DSM 5265 / OCM 4 / BT).